Reading from the N-terminus, the 63-residue chain is Large ribosomal subunit protein uL30 (63 aa).

This sequence belongs to the universal ribosomal protein uL30 family. As to quaternary structure, part of the 50S ribosomal subunit.

The sequence is that of Large ribosomal subunit protein uL30 from Xanthomonas campestris pv. campestris (strain 8004).